The following is a 480-amino-acid chain: 3-isopropylmalate dehydratase large subunit (480 aa).

Residues Cys360, Cys418, and Cys421 each coordinate [4Fe-4S] cluster.

This sequence belongs to the aconitase/IPM isomerase family. LeuC type 1 subfamily. As to quaternary structure, heterodimer of LeuC and LeuD. It depends on [4Fe-4S] cluster as a cofactor.

The catalysed reaction is (2R,3S)-3-isopropylmalate = (2S)-2-isopropylmalate. It participates in amino-acid biosynthesis; L-leucine biosynthesis; L-leucine from 3-methyl-2-oxobutanoate: step 2/4. Functionally, catalyzes the isomerization between 2-isopropylmalate and 3-isopropylmalate, via the formation of 2-isopropylmaleate. The sequence is that of 3-isopropylmalate dehydratase large subunit from Anaeromyxobacter dehalogenans (strain 2CP-1 / ATCC BAA-258).